A 203-amino-acid polypeptide reads, in one-letter code: dTTP/UTP pyrophosphatase (203 aa).

Residue Asp-74 is the Proton acceptor of the active site.

The protein belongs to the Maf family. YhdE subfamily. A divalent metal cation serves as cofactor.

The protein localises to the cytoplasm. The enzyme catalyses dTTP + H2O = dTMP + diphosphate + H(+). The catalysed reaction is UTP + H2O = UMP + diphosphate + H(+). In terms of biological role, nucleoside triphosphate pyrophosphatase that hydrolyzes dTTP and UTP. May have a dual role in cell division arrest and in preventing the incorporation of modified nucleotides into cellular nucleic acids. This chain is dTTP/UTP pyrophosphatase, found in Treponema denticola (strain ATCC 35405 / DSM 14222 / CIP 103919 / JCM 8153 / KCTC 15104).